The chain runs to 98 residues: NADH-ubiquinone oxidoreductase chain 4L (98 aa).

The next 3 helical transmembrane spans lie at 1–21, 29–49, and 58–78; these read MPLIYMNITLAFTMSLLGMLV, SLLCLEGMMLSLFIMITLMTL, and IMPITMLVFAACEAAVGLALL.

It belongs to the complex I subunit 4L family. In terms of assembly, core subunit of respiratory chain NADH dehydrogenase (Complex I) which is composed of 45 different subunits.

The protein localises to the mitochondrion inner membrane. The catalysed reaction is a ubiquinone + NADH + 5 H(+)(in) = a ubiquinol + NAD(+) + 4 H(+)(out). Functionally, core subunit of the mitochondrial membrane respiratory chain NADH dehydrogenase (Complex I) which catalyzes electron transfer from NADH through the respiratory chain, using ubiquinone as an electron acceptor. Part of the enzyme membrane arm which is embedded in the lipid bilayer and involved in proton translocation. In Pongo abelii (Sumatran orangutan), this protein is NADH-ubiquinone oxidoreductase chain 4L (MT-ND4L).